The primary structure comprises 317 residues: Mitochondrial outer membrane protein porin 4 (317 aa).

The segment at 1 to 30 (MEAETECKVPGVYSETGIPVEDPAPGLNSD) is disordered.

This sequence belongs to the eukaryotic mitochondrial porin (TC 1.B.8.1) family.

The protein resides in the mitochondrion outer membrane. Its function is as follows. Forms a channel through the mitochondrial outer membrane that allows diffusion of small hydrophilic molecules. The channel adopts an open conformation at low or zero membrane potential and a closed conformation at potentials above 30-40 mV. The open state has a weak anion selectivity whereas the closed state is cation-selective. The sequence is that of Mitochondrial outer membrane protein porin 4 (VDAC4) from Oryza sativa subsp. japonica (Rice).